The following is a 346-amino-acid chain: MNESTMNTKNSEQAILNSEYYETQEISHEIKTVNASVQSSILKDTNTYLTEATFNLPDYLAQRREKVEAALESSITSGYPEKLYKSMRYSLMAGGKRLRPILCLASCELSGGVLEMAMPTACALEMLHTMSLMHDDLPALDNDDYRRGKLTNHKVYGENIAILAGDALLPYAFEYIVVQTKGVPADRLLRVIGQLSHAVGAAGLAGGQVADLESEKLQNIDLATLNFIHSHKTGALLEACVVSGALLVGANDEVLWRLSRYARNVGLAFQIIDDVLDVIATKEQLGKTPGKDEKAQKATYPSLLGINESRYQAQKLIEEAKKELAPFEEKAIPLISLADYIITRTH.

Positions 96, 99, and 128 each coordinate isopentenyl diphosphate. Aspartate 135 and aspartate 141 together coordinate Mg(2+). Arginine 147 contacts isopentenyl diphosphate.

Belongs to the FPP/GGPP synthase family. Requires Mg(2+) as cofactor.

The catalysed reaction is isopentenyl diphosphate + dimethylallyl diphosphate = (2E)-geranyl diphosphate + diphosphate. Its pathway is isoprenoid biosynthesis; geranyl diphosphate biosynthesis; geranyl diphosphate from dimethylallyl diphosphate and isopentenyl diphosphate: step 1/1. Prenyltransferase involved in the biosynthesis of ambiguines, a family of hapalindole-type alkaloids. Catalyzes the addition of isopentenyl diphosphate (IPP) onto dimethylallyl diphosphate (DMAPP) to form geranyl pyrophosphate (GPP). Cannot use farnesyl diphosphate (FPP) or geranylgeranyl diphosphate (GGPP). In Fischerella ambigua (strain UTEX 1903), this protein is Dimethylallyltranstransferase.